Reading from the N-terminus, the 182-residue chain is Peptidyl-prolyl cis-trans isomerase ssp-1 (182 aa).

The WW domain occupies T7–G41. The region spanning Q71–E182 is the PpiC domain.

The catalysed reaction is [protein]-peptidylproline (omega=180) = [protein]-peptidylproline (omega=0). Site-specific PPIase with respect to the amino acid N-terminal to the proline residue. Peptides with glutamate, phosphoserine, or phosphothreonine in the -1 position are the best substrates. It is not only able to isomerize small peptides but is also active in protein folding. This Neurospora crassa (strain ATCC 24698 / 74-OR23-1A / CBS 708.71 / DSM 1257 / FGSC 987) protein is Peptidyl-prolyl cis-trans isomerase ssp-1 (ssp-1).